A 432-amino-acid chain; its full sequence is Serine/threonine-protein kinase Sgk1 (432 aa).

The tract at residues 67 to 93 is disordered; it reads PELMNANPSPPPSPSQQINLGPSSNPH. Residues 82 to 92 are compositionally biased toward polar residues; the sequence is QQINLGPSSNP. Residues 99 to 356 enclose the Protein kinase domain; the sequence is FHFLKVIGKG…FTEIKNHIFF (258 aa). ATP-binding positions include 105 to 113 and lysine 128; that span reads IGKGSFGKV. The Proton acceptor role is filled by aspartate 223. Residues 357 to 432 form the AGC-kinase C-terminal domain; that stretch reads SPINWDDLIN…SYAPPVDSFL (76 aa).

The protein belongs to the protein kinase superfamily. AGC Ser/Thr protein kinase family.

It localises to the cytoplasm. The protein localises to the nucleus. Its subcellular location is the endoplasmic reticulum. The catalysed reaction is L-seryl-[protein] + ATP = O-phospho-L-seryl-[protein] + ADP + H(+). It catalyses the reaction L-threonyl-[protein] + ATP = O-phospho-L-threonyl-[protein] + ADP + H(+). Protein kinase that may play an important role in cellular stress response. May be involved in the regulation of processes such as cell survival, neuronal excitability and renal sodium excretion. This is Serine/threonine-protein kinase Sgk1 (SGK1) from Gallus gallus (Chicken).